The chain runs to 143 residues: Transcriptional regulator MraZ (143 aa).

2 SpoVT-AbrB domains span residues 5 to 47 (EYNH…SMDE) and 76 to 119 (ATEC…SSDQ).

It belongs to the MraZ family. As to quaternary structure, forms oligomers.

The protein resides in the cytoplasm. Its subcellular location is the nucleoid. The protein is Transcriptional regulator MraZ of Alkaliphilus metalliredigens (strain QYMF).